Reading from the N-terminus, the 214-residue chain is Orotate phosphoribosyltransferase (214 aa).

K26 is a 5-phospho-alpha-D-ribose 1-diphosphate binding site. 34 to 35 contacts orotate; sequence FF. 5-phospho-alpha-D-ribose 1-diphosphate-binding positions include 72 to 73, R99, K100, K103, H105, and 124 to 132; these read YK and DDVITAGTA. Residues T128 and R156 each coordinate orotate.

Belongs to the purine/pyrimidine phosphoribosyltransferase family. PyrE subfamily. Homodimer. Requires Mg(2+) as cofactor.

It catalyses the reaction orotidine 5'-phosphate + diphosphate = orotate + 5-phospho-alpha-D-ribose 1-diphosphate. It functions in the pathway pyrimidine metabolism; UMP biosynthesis via de novo pathway; UMP from orotate: step 1/2. In terms of biological role, catalyzes the transfer of a ribosyl phosphate group from 5-phosphoribose 1-diphosphate to orotate, leading to the formation of orotidine monophosphate (OMP). The sequence is that of Orotate phosphoribosyltransferase from Pseudoalteromonas translucida (strain TAC 125).